The following is a 288-amino-acid chain: Probable ketoamine kinase PM0587 (288 aa).

92–94 (EAL) provides a ligand contact to ATP.

Belongs to the fructosamine kinase family.

In terms of biological role, ketoamine kinase that phosphorylates ketoamines on the third carbon of the sugar moiety to generate ketoamine 3-phosphate. The chain is Probable ketoamine kinase PM0587 from Pasteurella multocida (strain Pm70).